The primary structure comprises 519 residues: Galactose-1-phosphate uridylyltransferase (519 aa).

This sequence belongs to the galactose-1-phosphate uridylyltransferase type 2 family.

It is found in the cytoplasm. It catalyses the reaction alpha-D-galactose 1-phosphate + UDP-alpha-D-glucose = alpha-D-glucose 1-phosphate + UDP-alpha-D-galactose. Its pathway is carbohydrate metabolism; galactose metabolism. This chain is Galactose-1-phosphate uridylyltransferase, found in Caldanaerobacter subterraneus subsp. tengcongensis (strain DSM 15242 / JCM 11007 / NBRC 100824 / MB4) (Thermoanaerobacter tengcongensis).